Consider the following 190-residue polypeptide: Probable RNA-binding protein 18 (190 aa).

An RRM domain is found at 25–106 (HRLWIGNLDP…KKLVVRWAHA (82 aa)). Residues 166-190 (VYSYFKPPDKKRTTPYSRTAWKSRR) are disordered.

This is Probable RNA-binding protein 18 (RBM18) from Pongo abelii (Sumatran orangutan).